Here is a 93-residue protein sequence, read N- to C-terminus: UPF0358 protein OB1428 (93 aa).

The protein belongs to the UPF0358 family.

This is UPF0358 protein OB1428 from Oceanobacillus iheyensis (strain DSM 14371 / CIP 107618 / JCM 11309 / KCTC 3954 / HTE831).